The following is a 383-amino-acid chain: Trichodiene synthase (383 aa).

Belongs to the trichodiene synthase family.

The enzyme catalyses (2E,6E)-farnesyl diphosphate = trichodiene + diphosphate. The protein operates within sesquiterpene biosynthesis; trichothecene biosynthesis. TS is a member of the terpene cyclase group of enzymes. It catalyzes the isomerization and cyclization of farnesyl pyro-phosphate to form trichodiene, the first cyclic intermediate in the biosynthetic pathway for trichothecenes. It serves to branch trichothecene biosynthesis from the isoprenoid pathway. This chain is Trichodiene synthase (TRI5), found in Stachybotrys chartarum (Toxic black mold).